A 628-amino-acid polypeptide reads, in one-letter code: DEAD-box ATP-dependent RNA helicase 9 (628 aa).

Residues L98–R126 carry the Q motif motif. A Helicase ATP-binding domain is found at L129 to I302. A142–T149 is a binding site for ATP. A DEAD box motif is present at residues D250–D253. The Helicase C-terminal domain occupies V331–M478. Disordered stretches follow at residues G496 to G548 and S571 to S628. The segment covering R500–S509 has biased composition (low complexity). Residues R510–G548 show a composition bias toward gly residues.

Belongs to the DEAD box helicase family. DDX21/DDX50 subfamily.

It carries out the reaction ATP + H2O = ADP + phosphate + H(+). The protein is DEAD-box ATP-dependent RNA helicase 9 of Oryza sativa subsp. japonica (Rice).